The chain runs to 379 residues: Cathepsin B-like protease 1 (379 aa).

Residues 1-30 (MADSCCIRLHLLASVFLLLFSSFNLQGIAA) form the signal peptide. The propeptide at 31–102 (ENLSKQKLTS…PIVRHDLSLK (72 aa)) is activation peptide. Asn32 and Asn69 each carry an N-linked (GlcNAc...) asparagine glycan. 6 cysteine pairs are disulfide-bonded: Cys116/Cys165, Cys148/Cys191, Cys182/Cys236, Cys183/Cys187, Cys213/Cys240, and Cys222/Cys227. Residue Cys151 is part of the active site. N-linked (GlcNAc...) asparagine glycosylation is present at Asn171. Residues His306 and Asn327 contribute to the active site. Residue Asn330 is glycosylated (N-linked (GlcNAc...) asparagine). A propeptide spans 363–379 (NVFKGITTSDDLLVSSV) (removed in mature form).

The protein belongs to the peptidase C1 family.

Functionally, thiol protease that plays a central role in plant programmed cell death (PCD). In addition to its role in protein degradation, may cleave and/or degrade a number of target proteins, activating signaling towards PCD. Contributes to the increase of caspase-3-like activity after UV-C-induced PCD and is required for abiotic stress-induced PCD. Functions redundantly with CATHB2 and CATHB3 in basal defense and distinct forms of plant programmed cell death (PCD). Participates in the establishment of basal resistance against the bacterial pathogen Pseudomonase syringae pv. tomato DC3000. Required for full levels of PCD during resistance (R) gene-mediated hypersensitive response (HR). Involved in the regulation of senescence, a developmental form of PCD in plants. This chain is Cathepsin B-like protease 1, found in Arabidopsis thaliana (Mouse-ear cress).